Here is a 442-residue protein sequence, read N- to C-terminus: Urokinase-type plasminogen activator (442 aa).

Residues 1–20 (MRVLRACLSLCVLVVSDSKG) form the signal peptide. The EGF-like domain occupies 29–65 (GASNCGCLNGGKCVSYKYFSNIQRCSCPKKFQGEHCE). 12 cysteine pairs are disulfide-bonded: cysteine 33–cysteine 41, cysteine 35–cysteine 53, cysteine 55–cysteine 64, cysteine 72–cysteine 153, cysteine 93–cysteine 135, cysteine 124–cysteine 148, cysteine 179–cysteine 310, cysteine 220–cysteine 236, cysteine 228–cysteine 299, cysteine 324–cysteine 393, cysteine 356–cysteine 372, and cysteine 383–cysteine 411. The segment at 36–59 (LNGGKCVSYKYFSNIQRCSCPKKF) is binds urokinase plasminogen activator surface receptor. Residues 72-153 (CFEGNGHSYR…LVQECMVPNC (82 aa)) form the Kringle domain. Residue asparagine 152 is glycosylated (N-linked (GlcNAc...) asparagine). Residues 154–189 (SGGESHRPAYDGKNPFSTPEKVEFQCGQKALRPRFK) form a connecting peptide region. The Peptidase S1 domain maps to 190 to 435 (IVGGKSTTIE…FLTWIHTHVG (246 aa)). Residues histidine 235 and aspartate 286 each act as charge relay system in the active site. Serine 387 (charge relay system) is an active-site residue.

Belongs to the peptidase S1 family. Found in high and low molecular mass forms. Each consists of two chains, A and B. The high molecular mass form contains a long chain A which is cleaved to yield a short chain A. Forms heterodimer with SERPINA5. Binds LRP1B; binding is followed by internalization and degradation. Interacts with MRC2. Interacts with PLAUR. In complex with SERPINE1, interacts with PLAUR/uPAR. Interacts with SORL1 and LRP1, either alone or in complex with SERPINE1; these interactions are abolished in the presence of LRPAP1/RAP. The ternary complex composed of PLAUR-PLAU-PAI1 also interacts with SORLA. In terms of processing, produced as an inactive single-chain protein (pro-uPA or sc-uPA), is processed into the active disulfide-linked two-chain form of PLAU/uPA by a proteolytic event mediated, at least, by TMPRSS4.

Its subcellular location is the secreted. It carries out the reaction Specific cleavage of Arg-|-Val bond in plasminogen to form plasmin.. Inhibited by SERPINA5. Inhibited by SERPINE1. Specifically cleaves the zymogen plasminogen to form the active enzyme plasmin. In Sus scrofa (Pig), this protein is Urokinase-type plasminogen activator (PLAU).